Consider the following 255-residue polypeptide: Pyrroloquinoline-quinone synthase (255 aa).

The protein belongs to the PqqC family.

The enzyme catalyses 6-(2-amino-2-carboxyethyl)-7,8-dioxo-1,2,3,4,7,8-hexahydroquinoline-2,4-dicarboxylate + 3 O2 = pyrroloquinoline quinone + 2 H2O2 + 2 H2O + H(+). Its pathway is cofactor biosynthesis; pyrroloquinoline quinone biosynthesis. Functionally, ring cyclization and eight-electron oxidation of 3a-(2-amino-2-carboxyethyl)-4,5-dioxo-4,5,6,7,8,9-hexahydroquinoline-7,9-dicarboxylic-acid to PQQ. This is Pyrroloquinoline-quinone synthase from Acinetobacter baylyi (strain ATCC 33305 / BD413 / ADP1).